A 474-amino-acid chain; its full sequence is Glutamate--tRNA ligase 1 (474 aa).

Positions 11 to 21 (PSPTGYLHIGG) match the 'HIGH' region motif. The short motif at 240-244 (KLSKR) is the 'KMSKS' region element. Residue K243 participates in ATP binding.

It belongs to the class-I aminoacyl-tRNA synthetase family. Glutamate--tRNA ligase type 1 subfamily. As to quaternary structure, monomer.

Its subcellular location is the cytoplasm. The catalysed reaction is tRNA(Glu) + L-glutamate + ATP = L-glutamyl-tRNA(Glu) + AMP + diphosphate. Its function is as follows. Catalyzes the attachment of glutamate to tRNA(Glu) in a two-step reaction: glutamate is first activated by ATP to form Glu-AMP and then transferred to the acceptor end of tRNA(Glu). The chain is Glutamate--tRNA ligase 1 from Mesorhizobium japonicum (strain LMG 29417 / CECT 9101 / MAFF 303099) (Mesorhizobium loti (strain MAFF 303099)).